Reading from the N-terminus, the 353-residue chain is Alanine racemase (353 aa).

The active-site Proton acceptor; specific for D-alanine is K33. K33 is subject to N6-(pyridoxal phosphate)lysine. R129 is a binding site for substrate. Y250 acts as the Proton acceptor; specific for L-alanine in catalysis. Position 298 (M298) interacts with substrate.

Belongs to the alanine racemase family. Requires pyridoxal 5'-phosphate as cofactor.

It catalyses the reaction L-alanine = D-alanine. It functions in the pathway amino-acid biosynthesis; D-alanine biosynthesis; D-alanine from L-alanine: step 1/1. Its function is as follows. Catalyzes the interconversion of L-alanine and D-alanine. May also act on other amino acids. The polypeptide is Alanine racemase (alr) (Aromatoleum aromaticum (strain DSM 19018 / LMG 30748 / EbN1) (Azoarcus sp. (strain EbN1))).